Reading from the N-terminus, the 226-residue chain is Large ribosomal subunit protein uL3 (226 aa).

The interval 135–158 (MSSQRASHGNSRSHNVPGSIGMAQ) is disordered. A compositionally biased stretch (polar residues) spans 137–150 (SQRASHGNSRSHNV). Gln-158 bears the N5-methylglutamine mark.

It belongs to the universal ribosomal protein uL3 family. As to quaternary structure, part of the 50S ribosomal subunit. Forms a cluster with proteins L14 and L19. Post-translationally, methylated by PrmB.

Its function is as follows. One of the primary rRNA binding proteins, it binds directly near the 3'-end of the 23S rRNA, where it nucleates assembly of the 50S subunit. This chain is Large ribosomal subunit protein uL3, found in Polaromonas naphthalenivorans (strain CJ2).